A 119-amino-acid chain; its full sequence is V-type proton ATPase subunit F (119 aa).

Belongs to the V-ATPase F subunit family. As to quaternary structure, V-ATPase is a heteromultimeric enzyme composed of a peripheral catalytic V1 complex (components A to H) attached to an integral membrane V0 proton pore complex (components: a, c, c', c'', d, e, f and VOA1).

It localises to the vacuole membrane. In terms of biological role, subunit of the V1 complex of vacuolar(H+)-ATPase (V-ATPase), a multisubunit enzyme composed of a peripheral complex (V1) that hydrolyzes ATP and a membrane integral complex (V0) that translocates protons. V-ATPase is responsible for acidifying and maintaining the pH of intracellular compartments. This chain is V-type proton ATPase subunit F (VMA7), found in Vanderwaltozyma polyspora (strain ATCC 22028 / DSM 70294 / BCRC 21397 / CBS 2163 / NBRC 10782 / NRRL Y-8283 / UCD 57-17) (Kluyveromyces polysporus).